The primary structure comprises 164 residues: 3-hydroxyacyl-[acyl-carrier-protein] dehydratase FabZ (164 aa).

H61 is a catalytic residue.

It belongs to the thioester dehydratase family. FabZ subfamily.

It is found in the cytoplasm. It catalyses the reaction a (3R)-hydroxyacyl-[ACP] = a (2E)-enoyl-[ACP] + H2O. Functionally, involved in unsaturated fatty acids biosynthesis. Catalyzes the dehydration of short chain beta-hydroxyacyl-ACPs and long chain saturated and unsaturated beta-hydroxyacyl-ACPs. This Ralstonia nicotianae (strain ATCC BAA-1114 / GMI1000) (Ralstonia solanacearum) protein is 3-hydroxyacyl-[acyl-carrier-protein] dehydratase FabZ.